A 121-amino-acid chain; its full sequence is Small ribosomal subunit protein uS13 (121 aa).

Residues 91-121 (HRRGLPVRGQKTKNNARTRKGPVKTVANKKK) form a disordered region.

This sequence belongs to the universal ribosomal protein uS13 family. Part of the 30S ribosomal subunit. Forms a loose heterodimer with protein S19. Forms two bridges to the 50S subunit in the 70S ribosome.

Functionally, located at the top of the head of the 30S subunit, it contacts several helices of the 16S rRNA. In the 70S ribosome it contacts the 23S rRNA (bridge B1a) and protein L5 of the 50S subunit (bridge B1b), connecting the 2 subunits; these bridges are implicated in subunit movement. Contacts the tRNAs in the A and P-sites. This chain is Small ribosomal subunit protein uS13, found in Staphylococcus epidermidis (strain ATCC 35984 / DSM 28319 / BCRC 17069 / CCUG 31568 / BM 3577 / RP62A).